A 193-amino-acid polypeptide reads, in one-letter code: Peptidyl-tRNA hydrolase (193 aa).

A tRNA-binding site is contributed by Tyr-16. The Proton acceptor role is filled by His-21. 3 residues coordinate tRNA: Phe-67, Asn-69, and Asn-115.

Belongs to the PTH family. Monomer.

It is found in the cytoplasm. It carries out the reaction an N-acyl-L-alpha-aminoacyl-tRNA + H2O = an N-acyl-L-amino acid + a tRNA + H(+). Its function is as follows. Hydrolyzes ribosome-free peptidyl-tRNAs (with 1 or more amino acids incorporated), which drop off the ribosome during protein synthesis, or as a result of ribosome stalling. In terms of biological role, catalyzes the release of premature peptidyl moieties from peptidyl-tRNA molecules trapped in stalled 50S ribosomal subunits, and thus maintains levels of free tRNAs and 50S ribosomes. The chain is Peptidyl-tRNA hydrolase from Psychrobacter cryohalolentis (strain ATCC BAA-1226 / DSM 17306 / VKM B-2378 / K5).